Consider the following 295-residue polypeptide: MNSTINNDINNDINNDINNDINNTQSNSPIEAVIFDWAGTIVDFGSFAPTTIFVESFQKEYDFAITLQEARVPMGLGKWDHIQAVGKLPSVATRWQAQFGKAMDNADIDQIYNTFIPLQKVKVVDHADPILNAINVVNDLKKQGIKIGSCSGYPRAVMDVLIPAAAENGYLPDCVVATDDLPYGGRPAPHMALKNVIELGVNSVTNCIKVDDSTPGIEEGHNAGMWTVALLLSGNEAGLTAQEYQQASVQTLNKAREKARLIMKKSNPHYLIDTINDLPAVIKEIELRLIKGERP.

Residue D36 is the Nucleophile of the active site. 2 residues coordinate Mg(2+): D36 and A38. Residue K78 is the Schiff-base intermediate with substrate of the active site. D212 is a Mg(2+) binding site.

This sequence belongs to the HAD-like hydrolase superfamily. PhnX family. Homodimer. Mg(2+) is required as a cofactor.

The enzyme catalyses phosphonoacetaldehyde + H2O = acetaldehyde + phosphate + H(+). In terms of biological role, involved in phosphonate degradation. The polypeptide is Phosphonoacetaldehyde hydrolase (Psychromonas ingrahamii (strain DSM 17664 / CCUG 51855 / 37)).